Reading from the N-terminus, the 352-residue chain is tRNA (guanine-N(1)-)-methyltransferase (352 aa).

Residues G109 and 129–134 (IGDYVL) contribute to the S-adenosyl-L-methionine site.

Belongs to the RNA methyltransferase TrmD family. As to quaternary structure, homodimer.

It is found in the cytoplasm. It carries out the reaction guanosine(37) in tRNA + S-adenosyl-L-methionine = N(1)-methylguanosine(37) in tRNA + S-adenosyl-L-homocysteine + H(+). Functionally, specifically methylates guanosine-37 in various tRNAs. This is tRNA (guanine-N(1)-)-methyltransferase from Chlamydia trachomatis serovar A (strain ATCC VR-571B / DSM 19440 / HAR-13).